A 1341-amino-acid chain; its full sequence is Pleckstrin homology domain-containing family G member 3 (1341 aa).

The disordered stretch occupies residues 1–68 (MPVSTALHQD…PNSNNNSSGW (68 aa)). Positions 18–29 (SLVSTTSSSGSS) are enriched in low complexity. 2 stretches are compositionally biased toward polar residues: residues 42-51 (SEASAQNGTG) and 59-68 (PNSNNNSSGW). Serine 76 is modified (phosphoserine). The DH domain maps to 93–272 (YLGRVVREIV…TCVAWYINDM (180 aa)). A PH domain is found at 296–394 (DLTTYGELVL…WTHHIKRLIL (99 aa)). Phosphoserine occurs at positions 433 and 502. The segment at 433 to 482 (SQDEVSSHVRQGRRQSEPGHTLFSRATLPSRQQGFEMPGLKGRRKSEPTR) is disordered. Disordered stretches follow at residues 508 to 657 (DFGQ…EFPE) and 684 to 715 (PEGSEDLKPLSSEEEEEEEMEAAQEPESLLPP). Acidic residues-rich tracts occupy residues 529–541 (ELEEEEELVEEEE) and 570–580 (GSEEEEEEEES). A phosphoserine mark is found at serine 571, serine 694, serine 695, serine 737, serine 759, serine 762, and serine 766. A compositionally biased stretch (acidic residues) spans 695–707 (SEEEEEEEMEAAQ). Positions 775-832 (SIGDSLSNPPTPEVIIGADMVTDNGPSVNGTESPSAGSGCPTEQDRSSCKKKESALST) are disordered. The segment covering 798–810 (NGPSVNGTESPSA) has biased composition (polar residues). The segment covering 817–832 (EQDRSSCKKKESALST) has biased composition (basic and acidic residues). 4 positions are modified to phosphoserine: serine 862, serine 899, serine 900, and serine 947. 4 disordered regions span residues 876-930 (SRFN…EFCP), 939-958 (ERMESSERSPRTGSGQSQAN), 1071-1097 (KVTPDQEEQVPSISGLPEEAGELSGGK), and 1117-1162 (HGTS…PFDT). Basic and acidic residues predominate over residues 939–948 (ERMESSERSP). A compositionally biased stretch (polar residues) spans 949–958 (RTGSGQSQAN). A phosphoserine mark is found at serine 1129, serine 1134, serine 1136, serine 1141, serine 1155, serine 1158, and serine 1201. Over residues 1135-1162 (FSPSAVSPRTTSPGARSSARSPLSPFDT) the composition is skewed to polar residues. Disordered regions lie at residues 1204–1249 (ENIV…LNGG) and 1271–1341 (KGPH…NSVG). Residues 1309-1320 (QPKEHGPRDSAD) are compositionally biased toward basic and acidic residues.

Its subcellular location is the cytoplasm. The protein resides in the cytoskeleton. In terms of biological role, plays a role in controlling cell polarity and cell motility by selectively binding newly polymerized actin and activating RAC1 and CDC42 to enhance local actin polymerization. The protein is Pleckstrin homology domain-containing family G member 3 of Mus musculus (Mouse).